The following is a 101-amino-acid chain: Small ribosomal subunit protein bS18c (101 aa).

The protein belongs to the bacterial ribosomal protein bS18 family. As to quaternary structure, part of the 30S ribosomal subunit.

The protein resides in the plastid. It localises to the chloroplast. The chain is Small ribosomal subunit protein bS18c from Populus alba (White poplar).